The primary structure comprises 246 residues: Dolichol-phosphate mannosyltransferase subunit 1 (246 aa).

Residues Pro20, Tyr22, Glu24, Val49, Asp51, Asp104, Ala105, Asp106, Arg133, Arg220, and Lys226 each coordinate GDP-alpha-D-mannose. Asp106 contacts Mg(2+). Residue Asp106 participates in Mn(2+) binding.

It belongs to the glycosyltransferase 2 family. In terms of assembly, component of the dolichol-phosphate mannose (DPM) synthase complex composed of DPMS1, DPMS2 and DPMS3; in the complex interacts directly with DPMS3. Requires Mg(2+) as cofactor. Mn(2+) is required as a cofactor. Ca(2+) serves as cofactor.

The protein resides in the endoplasmic reticulum membrane. The enzyme catalyses a di-trans,poly-cis-dolichyl phosphate + GDP-alpha-D-mannose = a di-trans,poly-cis-dolichyl beta-D-mannosyl phosphate + GDP. The protein operates within protein modification; protein glycosylation. In terms of biological role, transfers mannose from GDP-mannose to dolichol monophosphate to form dolichol phosphate mannose (Dol-P-Man) which is the mannosyl donor in pathways leading to N-glycosylation, glycosyl phosphatidylinositol membrane anchoring, and O-mannosylation of proteins; catalytic subunit of the dolichol-phosphate mannose (DPM) synthase complex. Plays a role in plant development and physiology, sensitivity to ammonium stress and endoplasmic reticulum stress response. The chain is Dolichol-phosphate mannosyltransferase subunit 1 from Arabidopsis thaliana (Mouse-ear cress).